The chain runs to 260 residues: Carbonic anhydrase 2 (260 aa).

The residue at position 2 (Ser2) is an N-acetylserine. Residue Ser2 is modified to Phosphoserine. Positions 3–259 constitute an Alpha-carbonic anhydrase domain; it reads HHWGYSKHNG…LKNRKIKASF (257 aa). His64 functions as the Proton acceptor in the catalytic mechanism. Asn67 is an active-site residue. Residue Ser87 is modified to Phosphoserine. Zn(2+) is bound by residues His94, His96, and His119. The active site involves Tyr127. Ser165 is modified (phosphoserine). 198-199 contributes to the substrate binding site; it reads TT.

It belongs to the alpha-carbonic anhydrase family. In terms of assembly, interacts with SLC4A4. Interaction with SLC4A7 regulates SLC4A7 transporter activity. Interacts with SLC26A6. It depends on Zn(2+) as a cofactor.

It localises to the cytoplasm. The protein resides in the cell membrane. It catalyses the reaction hydrogencarbonate + H(+) = CO2 + H2O. The enzyme catalyses urea = cyanamide + H2O. With respect to regulation, inhibited by acetazolamide. Its function is as follows. Catalyzes the reversible hydration of carbon dioxide. Can also hydrate cyanamide to urea. Involved in the regulation of fluid secretion into the anterior chamber of the eye. Essential for bone resorption and osteoclast differentiation. Contributes to intracellular pH regulation in the duodenal upper villous epithelium during proton-coupled peptide absorption. Stimulates the chloride-bicarbonate exchange activity of SLC26A6. This is Carbonic anhydrase 2 (Ca2) from Mus musculus (Mouse).